The sequence spans 165 residues: Ribosome maturation factor RimM (165 aa).

A PRC barrel domain is found at 89-161 (EADTHYIVDL…KIVVKPVRQW (73 aa)).

It belongs to the RimM family. Binds ribosomal protein uS19.

Its subcellular location is the cytoplasm. Its function is as follows. An accessory protein needed during the final step in the assembly of 30S ribosomal subunit, possibly for assembly of the head region. Essential for efficient processing of 16S rRNA. May be needed both before and after RbfA during the maturation of 16S rRNA. It has affinity for free ribosomal 30S subunits but not for 70S ribosomes. This Clostridium botulinum (strain Alaska E43 / Type E3) protein is Ribosome maturation factor RimM.